Reading from the N-terminus, the 373-residue chain is Peptide chain release factor subunit 1 (373 aa).

The protein belongs to the eukaryotic release factor 1 family. As to quaternary structure, heterodimer of two subunits, one of which binds GTP.

It is found in the cytoplasm. Functionally, directs the termination of nascent peptide synthesis (translation) in response to the termination codons UAA, UAG and UGA. The chain is Peptide chain release factor subunit 1 (prf1) from Aeropyrum pernix (strain ATCC 700893 / DSM 11879 / JCM 9820 / NBRC 100138 / K1).